The primary structure comprises 191 residues: Ribosomal RNA small subunit methyltransferase G (191 aa).

S-adenosyl-L-methionine contacts are provided by residues glycine 62, leucine 67, 111–112 (IE), and arginine 124.

This sequence belongs to the methyltransferase superfamily. RNA methyltransferase RsmG family.

It is found in the cytoplasm. It carries out the reaction guanosine(527) in 16S rRNA + S-adenosyl-L-methionine = N(7)-methylguanosine(527) in 16S rRNA + S-adenosyl-L-homocysteine. Functionally, specifically methylates the N7 position of guanine in position 527 of 16S rRNA. The sequence is that of Ribosomal RNA small subunit methyltransferase G from Rickettsia rickettsii (strain Sheila Smith).